Consider the following 171-residue polypeptide: Adenine phosphoribosyltransferase (171 aa).

It belongs to the purine/pyrimidine phosphoribosyltransferase family. In terms of assembly, homodimer.

It is found in the cytoplasm. The enzyme catalyses AMP + diphosphate = 5-phospho-alpha-D-ribose 1-diphosphate + adenine. The protein operates within purine metabolism; AMP biosynthesis via salvage pathway; AMP from adenine: step 1/1. Catalyzes a salvage reaction resulting in the formation of AMP, that is energically less costly than de novo synthesis. The sequence is that of Adenine phosphoribosyltransferase from Trichlorobacter lovleyi (strain ATCC BAA-1151 / DSM 17278 / SZ) (Geobacter lovleyi).